A 713-amino-acid chain; its full sequence is MTATLDVPEQNPDLVLDQSADDYWNHYQLTFALYSVSDRAIPSAYDGLKPGQRRLLYQMHDSKLLPGNKPQKSSKVCSAVTGNLHPHGGASMYGAAALMAADFQRVKVIDGQGAFPRIQGDIPAADRYTEMRLSAPGAALTAELNDHAVPMVPTFDGEWVEPTVLPAQWPVLLCNGAVGIAEGWATKVPAHNPREVMAACRALLKTPNMTDDRLCKLIPGPDWGSGASVVGTAGLREYITTGRGHFTVRGTISVEGKNCIITELPPGVASNTVQDRIRALVESGEMSGVADMSDLTDRRNGLRIVVTAKRGHNAEQIRDQLLALTPLESTFAASLVALDENRVPRWWSVRDLIMAFLQLRDSVVLHRSEYRLEKVTARRHLVAGLMKIHLDIDAAVAVIRGSETVDEARKGLQERFKIDAEQADYVLSLQLRRLTKLDVIELQAEAEKLDAEFAELNDLVTNPESRRKVIDKELVETAKLFKGPEYDRRTVLDFDATPVSRGDEDGSRERKVNTAWRLDDRGVFSDSHGELLTSGLGWAVWSDGRIKFTTGNGLPFKIRDIPVAPDITGLVRSGVLPEGYHLALVTRRGKILRVDPASVNPQGVAGNGVAGVKLAADGDEVIAALPVSCANGEAILSIAEKSWKVTEVADIPVKGRGGAGVAFHPFVKGEDALLAASISKTGYVRGKRAVRPENRAKASIKGSGADVTPAPAE.

A Topo IIA-type catalytic domain is found at Ile-41–Glu-504. Tyr-128 (O-(5'-phospho-DNA)-tyrosine intermediate) is an active-site residue. The disordered stretch occupies residues Asn-694 to Glu-713.

This sequence belongs to the type II topoisomerase GyrA/ParC subunit family. As to quaternary structure, a complex of TopoN and TopoM, possibly a heterotetramer. The cofactor is Mg(2+).

It catalyses the reaction ATP-dependent breakage, passage and rejoining of double-stranded DNA.. Its activity is regulated as follows. Inhibited by quinolone antibiotic ciprofloxacin and coumarin antibiotic novobiocin, but at much higher concentrations than is usual for DNA gyrase/topoisomerase. Functionally, catalyzes the relaxation of negatively supercoiled DNA in the presence of ATP or dATP but not other nucleotides. Individual subunits have no activity. Not able to negatively supercoil DNA, it can however introduce positive supercoils in DNA. Relaxes positive supercoils in an ATP-dependent manner. Catenates and decatenates DNA. Generates dsDNA breaks in the presence of the quinolone antibiotic ciprofloxacin, showing it is a topoisomerase. In Mycolicibacterium smegmatis (strain ATCC 700084 / mc(2)155) (Mycobacterium smegmatis), this protein is Topoisomerase subunit TopoM.